Consider the following 546-residue polypeptide: Cholesterol oxidase (546 aa).

Residues 1-42 constitute a signal peptide (tat-type signal); the sequence is MTAQQHLSRRRMLGMAAFGAAALAGGTTIAAPRAAAAAKSAA. Y57, G58, E77, G152, N156, G157, M159, and V287 together coordinate FAD. Active-site proton acceptor residues include E398 and H484. Positions 512 and 524 each coordinate FAD.

The protein belongs to the GMC oxidoreductase family. In terms of assembly, monomer. FAD serves as cofactor. Predicted to be exported by the Tat system. The position of the signal peptide cleavage has been experimentally proven.

Its subcellular location is the secreted. It carries out the reaction cholesterol + O2 = cholest-5-en-3-one + H2O2. The enzyme catalyses cholest-5-en-3-one = cholest-4-en-3-one. It participates in steroid metabolism; cholesterol degradation. Bifunctional enzyme that catalyzes the oxidation and isomerization of cholesterol to cholestenone (cholest-4-en-3-one), an initial step in the cholesterol degradation process. The cholesterol degradation pathway allows the bacterium to utilize cholesterol as its sole source of carbon and energy. This chain is Cholesterol oxidase, found in Streptomyces sp. (strain SA-COO).